A 284-amino-acid chain; its full sequence is D-tagatose-1,6-bisphosphate aldolase subunit GatY (284 aa).

Catalysis depends on Asp82, which acts as the Proton donor. Residues His83 and His180 each coordinate Zn(2+). Residue Gly181 participates in dihydroxyacetone phosphate binding. His208 lines the Zn(2+) pocket. Dihydroxyacetone phosphate is bound by residues 209–211 and 230–233; these read GAS and NVAT.

This sequence belongs to the class II fructose-bisphosphate aldolase family. TagBP aldolase GatY subfamily. As to quaternary structure, forms a complex with GatZ. It depends on Zn(2+) as a cofactor.

It carries out the reaction D-tagatofuranose 1,6-bisphosphate = D-glyceraldehyde 3-phosphate + dihydroxyacetone phosphate. It functions in the pathway carbohydrate metabolism; D-tagatose 6-phosphate degradation; D-glyceraldehyde 3-phosphate and glycerone phosphate from D-tagatose 6-phosphate: step 2/2. In terms of biological role, catalytic subunit of the tagatose-1,6-bisphosphate aldolase GatYZ, which catalyzes the reversible aldol condensation of dihydroxyacetone phosphate (DHAP or glycerone-phosphate) with glyceraldehyde 3-phosphate (G3P) to produce tagatose 1,6-bisphosphate (TBP). Requires GatZ subunit for full activity and stability. Is involved in the catabolism of galactitol. In Shigella boydii serotype 4 (strain Sb227), this protein is D-tagatose-1,6-bisphosphate aldolase subunit GatY.